The sequence spans 150 residues: MKLSDLRPNPGANKRRKRVGRGPGSGHGKTATRGHKGQKSRSGGLKDPRRFEGGRSTTLMRLPKRGMQGQVPGEIKRPRYQGVNLKDLARFEGEVTPELLVRAGLLKKGYRLKILGEGEAKPLKVVAHAFSKSALEKLKAAGGEPVLLEA.

The segment at 1 to 60 (MKLSDLRPNPGANKRRKRVGRGPGSGHGKTATRGHKGQKSRSGGLKDPRRFEGGRSTTLM) is disordered. The span at 30 to 39 (TATRGHKGQK) shows a compositional bias: basic residues. A compositionally biased stretch (basic and acidic residues) spans 44–53 (GLKDPRRFEG).

Belongs to the universal ribosomal protein uL15 family. Part of the 50S ribosomal subunit.

Binds to the 23S rRNA. The polypeptide is Large ribosomal subunit protein uL15 (Thermus thermophilus (strain ATCC BAA-163 / DSM 7039 / HB27)).